A 444-amino-acid polypeptide reads, in one-letter code: Exodeoxyribonuclease 7 large subunit (444 aa).

It belongs to the XseA family. Heterooligomer composed of large and small subunits.

It localises to the cytoplasm. It catalyses the reaction Exonucleolytic cleavage in either 5'- to 3'- or 3'- to 5'-direction to yield nucleoside 5'-phosphates.. Bidirectionally degrades single-stranded DNA into large acid-insoluble oligonucleotides, which are then degraded further into small acid-soluble oligonucleotides. The chain is Exodeoxyribonuclease 7 large subunit from Xylella fastidiosa (strain 9a5c).